The sequence spans 410 residues: uncharacterized protein (410 aa).

H87 is a Zn(2+) binding site. D89 is an active-site residue. D120 contributes to the Zn(2+) binding site. The active-site Proton acceptor is E154. Zn(2+) is bound by residues E155, D184, and H387.

Belongs to the peptidase M20A family. Requires Zn(2+) as cofactor. The cofactor is Co(2+).

This is an uncharacterized protein from Methanocaldococcus jannaschii (strain ATCC 43067 / DSM 2661 / JAL-1 / JCM 10045 / NBRC 100440) (Methanococcus jannaschii).